Here is a 407-residue protein sequence, read N- to C-terminus: Arginine deiminase (407 aa).

The active-site Amidino-cysteine intermediate is the Cys397.

It belongs to the arginine deiminase family.

Its subcellular location is the cytoplasm. The enzyme catalyses L-arginine + H2O = L-citrulline + NH4(+). It participates in amino-acid degradation; L-arginine degradation via ADI pathway; carbamoyl phosphate from L-arginine: step 1/2. This Escherichia coli O81 (strain ED1a) protein is Arginine deiminase.